The chain runs to 385 residues: Homoserine O-succinyltransferase (385 aa).

The 311-residue stretch at 45 to 355 (NAVLVCHALN…PHGHDAFLLD (311 aa)) folds into the AB hydrolase-1 domain. The active-site Nucleophile is serine 151. Arginine 221 contacts substrate. Catalysis depends on residues aspartate 316 and histidine 349. Position 350 (aspartate 350) interacts with substrate.

It belongs to the AB hydrolase superfamily. MetX family. In terms of assembly, homodimer.

It localises to the cytoplasm. It carries out the reaction L-homoserine + succinyl-CoA = O-succinyl-L-homoserine + CoA. It participates in amino-acid biosynthesis; L-methionine biosynthesis via de novo pathway; O-succinyl-L-homoserine from L-homoserine: step 1/1. Transfers a succinyl group from succinyl-CoA to L-homoserine, forming succinyl-L-homoserine. In Janthinobacterium sp. (strain Marseille) (Minibacterium massiliensis), this protein is Homoserine O-succinyltransferase.